We begin with the raw amino-acid sequence, 133 residues long: Small ribosomal subunit protein uS8 (133 aa).

It belongs to the universal ribosomal protein uS8 family. As to quaternary structure, part of the 30S ribosomal subunit. Contacts proteins S5 and S12.

One of the primary rRNA binding proteins, it binds directly to 16S rRNA central domain where it helps coordinate assembly of the platform of the 30S subunit. The sequence is that of Small ribosomal subunit protein uS8 from Leptospira borgpetersenii serovar Hardjo-bovis (strain JB197).